The chain runs to 155 residues: Protein SprT-like (155 aa).

Residues 7–145 (QRHMEEVSLQ…GSCGGKLIQI (139 aa)) enclose the SprT-like domain. Zn(2+) is bound at residue H67. The active site involves E68. H71 provides a ligand contact to Zn(2+).

The protein belongs to the SprT family. Zn(2+) serves as cofactor.

The protein resides in the cytoplasm. The sequence is that of Protein SprT-like from Listeria monocytogenes serotype 4a (strain HCC23).